A 321-amino-acid chain; its full sequence is Coproporphyrin III ferrochelatase (321 aa).

Fe(2+)-binding residues include His185 and Glu267.

Belongs to the ferrochelatase family.

The protein localises to the cytoplasm. It catalyses the reaction Fe-coproporphyrin III + 2 H(+) = coproporphyrin III + Fe(2+). It functions in the pathway porphyrin-containing compound metabolism; protoheme biosynthesis. In terms of biological role, involved in coproporphyrin-dependent heme b biosynthesis. Catalyzes the insertion of ferrous iron into coproporphyrin III to form Fe-coproporphyrin III. This Lacticaseibacillus paracasei (strain ATCC 334 / BCRC 17002 / CCUG 31169 / CIP 107868 / KCTC 3260 / NRRL B-441) (Lactobacillus paracasei) protein is Coproporphyrin III ferrochelatase.